We begin with the raw amino-acid sequence, 400 residues long: tRNA-specific adenosine deaminase TAD3 (400 aa).

The CMP/dCMP-type deaminase domain occupies 250-385 (SQWHPLRHAS…KSLNHHYAVF (136 aa)). Position 257 (H257) interacts with Zn(2+). The interval 273–320 (LFPNPSKIFDQDHVPPSNTDSPAKKQKTSSQSPDVQNDSREETVRDPS) is disordered. Residues 309 to 320 (NDSREETVRDPS) show a composition bias toward basic and acidic residues. Residues C339 and C342 each coordinate Zn(2+).

This sequence belongs to the cytidine and deoxycytidylate deaminase family. ADAT3 subfamily. As to quaternary structure, interacts with TAD2.

The protein resides in the nucleus. The protein localises to the cytoplasm. The catalysed reaction is adenosine(34) in tRNA + H2O + H(+) = inosine(34) in tRNA + NH4(+). In terms of biological role, involved in RNA editing. Catalyzes the specific deamination of adenosine-34 in several cytosolic tRNA species. Generates inosine at the wobble position of the anticodon loop. This Arabidopsis thaliana (Mouse-ear cress) protein is tRNA-specific adenosine deaminase TAD3.